Consider the following 470-residue polypeptide: MVRVSEDLIRRRAEHNNCEIFSLEEISLHQQDLERIEYIDKWCRELKILYLQNNLIGKIENVSKLKKLEYLNLALNNIEKIENLEGCESLQKLDLTVNFVGDLSSINSLQENRQLREFYLVGNPCAEYEGYRQYVVATLPQLKWLDGKEIERSERIQAAQDYPQVQGKIKEQEEAYLRKRAAEREKATNNLQQKQKEGRKAQEKKPGFDRRWYTDINNTIPDPVEKTDTVAQLNVDETALRNDDEEEEKEFWNQPSQYTPESRLETHRYLEEKRKSKENRSEEELKKKPPRTLITAEGRVLNVNESKLDFSLVDDEENNQFVLDLAIYRHLDTSLLDVDVQPGYIKVLVKEKPFQLVLPAEVKPDSSAAKRSQTTGHLVVTMPKATEMIQTKRAKSPAIAERTCKNPQKCLKTHEKLEVDPKARSIPDVANIVQEKKTWAQGPLRLHRNSARDTADSEDFIDNAEVPPLV.

LRR repeat units follow at residues 20–43, 44–65, 66–89, and 90–110; these read IFSLEEISLHQQDLERIEYIDKWC, RELKILYLQNNLIGKIENVSKL, KKLEYLNLALNNIEKIENLEGCES, and LQKLDLTVNFVGDLSSINSLQ. The LRRCT domain maps to 128-146; sequence YEGYRQYVVATLPQLKWLD. Residues 177-288 are a coiled coil; that stretch reads LRKRAAEREK…NRSEEELKKK (112 aa). The segment at 182–265 is disordered; it reads AEREKATNNL…SQYTPESRLE (84 aa). The span at 194–213 shows a compositional bias: basic and acidic residues; that stretch reads KQKEGRKAQEKKPGFDRRWY. The 93-residue stretch at 303–395 folds into the CS domain; the sequence is VNESKLDFSL…TEMIQTKRAK (93 aa). Residues 447-470 are disordered; sequence HRNSARDTADSEDFIDNAEVPPLV.

Belongs to the tilB family.

Its subcellular location is the cytoplasm. The protein localises to the cell projection. It is found in the cilium. The protein resides in the dynein axonemal particle. It localises to the flagellum. Involved in dynein arm assembly, is important for expression and transporting outer dynein arm (ODA) proteins from the cytoplasm to the cilia. The protein is Dynein axonemal assembly factor 11 (dnaaf11) of Xenopus tropicalis (Western clawed frog).